Here is a 93-residue protein sequence, read N- to C-terminus: Guanine nucleotide-binding protein subunit gamma 1 (93 aa).

Residues 12–52 (TRGRHRIQAELKKLEQEARFLEEELEELDKTDKVSAALQEL) adopt a coiled-coil conformation. The 74-residue stretch at 20–93 (AELKKLEQEA…DLRRCKCWFL (74 aa)) folds into the G protein gamma domain. Cysteine 88 is lipidated: S-palmitoyl cysteine. Cysteine 90 is subject to Cysteine methyl ester. Cysteine 90 carries S-farnesyl cysteine lipidation. Residues 91–93 (WFL) constitute a propeptide, removed in mature form.

G proteins are composed of 3 units, alpha, beta and gamma. Interacts with the beta subunit RGB1.

The protein resides in the cell membrane. Functionally, guanine nucleotide-binding proteins (G proteins) are involved as modulators or transducers in various transmembrane signaling systems. The protein is Guanine nucleotide-binding protein subunit gamma 1 of Oryza sativa subsp. indica (Rice).